A 304-amino-acid chain; its full sequence is Ornithine carbamoyltransferase (304 aa).

Carbamoyl phosphate is bound by residues S47–T50, R98, and H125–Q128. L-ornithine contacts are provided by residues N156, D221, and S225–M226. Carbamoyl phosphate is bound by residues C262–L263 and R290.

It belongs to the aspartate/ornithine carbamoyltransferase superfamily. OTCase family.

It localises to the cytoplasm. It catalyses the reaction carbamoyl phosphate + L-ornithine = L-citrulline + phosphate + H(+). The protein operates within amino-acid biosynthesis; L-arginine biosynthesis; L-arginine from L-ornithine and carbamoyl phosphate: step 1/3. Reversibly catalyzes the transfer of the carbamoyl group from carbamoyl phosphate (CP) to the N(epsilon) atom of ornithine (ORN) to produce L-citrulline. The chain is Ornithine carbamoyltransferase from Methanococcus maripaludis (strain C7 / ATCC BAA-1331).